The chain runs to 625 residues: pH-response transcription factor pacC/RIM101 (625 aa).

The segment covering Met-1–Ser-34 has biased composition (low complexity). Residues Met-1 to Ile-35 are disordered. 3 C2H2-type zinc fingers span residues Leu-45 to His-70, Leu-81 to His-105, and His-111 to His-133. The span at Ala-391–Val-416 shows a compositional bias: polar residues. A disordered region spans residues Ala-391–Ser-440. Residues Ser-417–Ser-438 show a composition bias toward low complexity. The YPX[LI] motif 1 signature appears at Tyr-444 to Leu-447. Disordered regions lie at residues Ser-455–Val-543 and Val-584–Glu-625. Polar residues-rich tracts occupy residues Thr-461–Asp-472 and Gly-490–Glu-514. Residues Tyr-615–Leu-618 carry the YPX[LI] motif 2 motif.

Belongs to the pacC/RIM101 family. In terms of processing, activated by C-terminal proteolytic cleavage by signaling protease (probably palB/RIM13) at neutral to alkaline ambient pH.

It is found in the cytoplasm. The protein resides in the nucleus. Its function is as follows. Transcription factor that mediates regulation of both acid- and alkaline-expressed genes in response to ambient pH. At alkaline ambient pH, activates transcription of alkaline-expressed genes (including pac1 itself) and represses transcription of acid-expressed genes. The chain is pH-response transcription factor pacC/RIM101 (pac1) from Sclerotinia sclerotiorum (White mold).